The sequence spans 227 residues: LysM and putative peptidoglycan-binding domain-containing protein 1 (227 aa).

Residues 1-11 (MASPSRQPPPG) show a composition bias toward pro residues. Residues 1-22 (MASPSRQPPPGGSGLLQGSRAR) are disordered. A phosphoserine mark is found at serine 23 and serine 33. Positions 40–84 (LEHQLEPGDTLAGLALKYGVTMEQIKRANRLYTNDSIFLKKTLYI) constitute a LysM domain. Residues 97 to 150 (LDSEEEKDGEEKVHPSNSEVWPHSTERKKQETGAGRANGEVLPTPGQETPTPIH) form a disordered region. 4 positions are modified to phosphoserine: serine 99, serine 166, serine 194, and serine 212.

In Homo sapiens (Human), this protein is LysM and putative peptidoglycan-binding domain-containing protein 1 (LYSMD1).